Here is a 577-residue protein sequence, read N- to C-terminus: Arginine--tRNA ligase (577 aa).

Positions 122–132 match the 'HIGH' region motif; it reads PNVAKEMHVGH.

The protein belongs to the class-I aminoacyl-tRNA synthetase family. As to quaternary structure, monomer.

The protein localises to the cytoplasm. The enzyme catalyses tRNA(Arg) + L-arginine + ATP = L-arginyl-tRNA(Arg) + AMP + diphosphate. The polypeptide is Arginine--tRNA ligase (Escherichia coli O157:H7 (strain EC4115 / EHEC)).